We begin with the raw amino-acid sequence, 485 residues long: DNA polymerase subunit gamma-2 (485 aa).

Positions 28–65 are disordered; it reads GQPELLTERSSPKGGHVKSHAELEGNGEHPEAPGSGEG. Phosphoserine is present on S38. Residues 46-58 are compositionally biased toward basic and acidic residues; sequence SHAELEGNGEHPE.

As to quaternary structure, heterotrimer composed of a catalytic subunit and a homodimer of accessory subunits (POLG:POLG2).

The protein localises to the mitochondrion. It localises to the mitochondrion matrix. It is found in the mitochondrion nucleoid. Accessory subunit of DNA polymerase gamma solely responsible for replication of mitochondrial DNA (mtDNA). Acts as an allosteric regulator of the holoenzyme activities. Enhances the polymerase activity and the processivity of POLG by increasing its interactions with the DNA template. Suppresses POLG exonucleolytic proofreading especially toward homopolymeric templates bearing mismatched termini. Binds to single-stranded DNA. The sequence is that of DNA polymerase subunit gamma-2 from Homo sapiens (Human).